The chain runs to 403 residues: uncharacterized protein (403 aa).

H81 contributes to the Zn(2+) binding site. D83 is an active-site residue. A Zn(2+)-binding site is contributed by D114. The active-site Proton acceptor is E148. 3 residues coordinate Zn(2+): E149, E174, and H374.

This sequence belongs to the peptidase M20A family. The cofactor is Zn(2+). Co(2+) is required as a cofactor.

This is an uncharacterized protein from Escherichia coli O157:H7.